We begin with the raw amino-acid sequence, 497 residues long: MGSLEMVPMGAGPPSPGGDPDGYDGGNNSQYPSASGSSGNTPTPPNDEERESNEEPPPPYEDPYWGNGDRHSDYQPLGTQDQSLYLGLQHDGNDGLPPPPYSPRDDSSQHIYEEAGRGSMNPVCLPVIVAPYLFWLAAIAASCFTASVSTVVTATGLALSLLLLAAVASSYAAAQRKLLTPVTVLTAVVTFFAICLTWRIEDPPFNSLLFALLAAAGGLQGIYVLVMLVLLILAYRRRWRRLTVCGGIMFLACVLVLIVDAVLQLSPLLGAVTVVSMTLLLLAFVLWLSSPGGLGTLGAALLTLAAALALLASLILGTLNLTTMFLLMLLWTLVVLLICSSCSSCPLSKILLARLFLYALALLLLASALIAGGSILQTNFKSLSSTEFIPNLFCMLLLIVAGILFILAILTEWGSGNRTYGPVFMCLGGLLTMVAGAVWLTVMSNTLLSAWILTAGFLIFLIGFALFGVIRCCRYCCYYCLTLESEERPPTPYRNTV.

The interval 1-108 (MGSLEMVPMG…PPYSPRDDSS (108 aa)) is disordered. At 1-123 (MGSLEMVPMG…EAGRGSMNPV (123 aa)) the chain is on the cytoplasmic side. A compositionally biased stretch (polar residues) spans 27 to 41 (NNSQYPSASGSSGNT). The PPxY motif signature appears at 97–101 (PPPPY). Tyrosine 112 bears the Phosphotyrosine; by host mark. A helical transmembrane segment spans residues 124–144 (CLPVIVAPYLFWLAAIAASCF). The Extracellular portion of the chain corresponds to 145–147 (TAS). A helical transmembrane segment spans residues 148 to 168 (VSTVVTATGLALSLLLLAAVA). Over 169 to 177 (SSYAAAQRK) the chain is Cytoplasmic. Residues 178–198 (LLTPVTVLTAVVTFFAICLTW) form a helical membrane-spanning segment. Residues 199–211 (RIEDPPFNSLLFA) lie on the Extracellular side of the membrane. Residues 212–232 (LLAAAGGLQGIYVLVMLVLLI) form a helical membrane-spanning segment. Residues 233–241 (LAYRRRWRR) are Cytoplasmic-facing. A helical membrane pass occupies residues 242 to 262 (LTVCGGIMFLACVLVLIVDAV). At 263–267 (LQLSP) the chain is on the extracellular side. The chain crosses the membrane as a helical span at residues 268-288 (LLGAVTVVSMTLLLLAFVLWL). Residues 289–296 (SSPGGLGT) are Cytoplasmic-facing. Residues 297–317 (LGAALLTLAAALALLASLILG) form a helical membrane-spanning segment. A topological domain (extracellular) is located at residue threonine 318. The chain crosses the membrane as a helical span at residues 319–339 (LNLTTMFLLMLLWTLVVLLIC). Residues 340 to 354 (SSCSSCPLSKILLAR) lie on the Cytoplasmic side of the membrane. The helical transmembrane segment at 355–375 (LFLYALALLLLASALIAGGSI) threads the bilayer. Over 376–388 (LQTNFKSLSSTEF) the chain is Extracellular. The chain crosses the membrane as a helical span at residues 389 to 409 (IPNLFCMLLLIVAGILFILAI). The Cytoplasmic segment spans residues 410 to 422 (LTEWGSGNRTYGP). Residues 423–443 (VFMCLGGLLTMVAGAVWLTVM) traverse the membrane as a helical segment. Over 444–449 (SNTLLS) the chain is Extracellular. The helical transmembrane segment at 450–470 (AWILTAGFLIFLIGFALFGVI) threads the bilayer. The Cytoplasmic portion of the chain corresponds to 471–497 (RCCRYCCYYCLTLESEERPPTPYRNTV).

Belongs to the herpesviridae LMP-2 family. The cytoplasmic N-terminal domain interacts with human SRC family protein tyrosine kinases SYK and LYN. Binds human ITCH, WWP2 and NEDD4L. Phosphorylated on cytoplasmic N-terminal tyrosine residues, possibly by human LYN. Post-translationally, can be ubiquitinated by human ITCH and WWP2 on the N-terminus in a lysine-independent manner.

The protein localises to the host cell membrane. Its subcellular location is the host endomembrane system. It is found in the host cytoplasm. The protein resides in the host perinuclear region. Functionally, maintains EBV latent infection of B-lymphocyte, by preventing lytic reactivation of the virus in response to surface immunoglobulin (sIg) cross-linking. Acts like a dominant negative inhibitor of the sIg-associated protein tyrosine kinases, LYN and SYK. Also blocks translocation of the B-cell antigen receptor (BCR) into lipid rafts, preventing the subsequent signaling and accelerated internalization of the BCR upon BCR cross-linking. Serves as a molecular scaffold to recruit SYK, LYN and E3 protein-ubiquitin ligases, such as ITCH and NEDD4L, leading to ubiquitination and potential degradation of both tyrosines kinases. Possesses a constitutive signaling activity in non-transformed cells, inducing bypass of normal B lymphocyte developmental checkpoints allowing immunoglobulin-negative cells to colonize peripheral lymphoid organs. May be a negative regulator of isoform LMP2A. This is Latent membrane protein 2 (LMP2) from Epstein-Barr virus (strain B95-8) (HHV-4).